Consider the following 445-residue polypeptide: Arabinooligosaccharide-binding protein (445 aa).

An N-terminal signal peptide occupies residues 1–20; sequence MGKNILFFSFVGVMVLVLVA. Residue cysteine 21 is the site of N-palmitoyl cysteine attachment. A lipid anchor (S-diacylglycerol cysteine) is attached at cysteine 21.

Belongs to the bacterial solute-binding protein 1 family. As to quaternary structure, the complex is composed of two ATP-binding proteins (MsmX), two transmembrane proteins (AraP and AraQ) and a solute-binding protein (AraN).

The protein resides in the cell membrane. Its function is as follows. Part of the ABC transporter complex AraNPQ involved in the uptake of arabinooligosaccharides. AraN captures the substrate and delivers it to the two transmembrane components. The protein is Arabinooligosaccharide-binding protein (araN) of Halalkalibacterium halodurans (strain ATCC BAA-125 / DSM 18197 / FERM 7344 / JCM 9153 / C-125) (Bacillus halodurans).